Here is a 188-residue protein sequence, read N- to C-terminus: Elongation factor P (188 aa).

This sequence belongs to the elongation factor P family.

Its subcellular location is the cytoplasm. It participates in protein biosynthesis; polypeptide chain elongation. In terms of biological role, involved in peptide bond synthesis. Stimulates efficient translation and peptide-bond synthesis on native or reconstituted 70S ribosomes in vitro. Probably functions indirectly by altering the affinity of the ribosome for aminoacyl-tRNA, thus increasing their reactivity as acceptors for peptidyl transferase. The polypeptide is Elongation factor P (Rickettsia rickettsii (strain Iowa)).